The chain runs to 377 residues: Queuine tRNA-ribosyltransferase (377 aa).

Asp-89 (proton acceptor) is an active-site residue. Substrate is bound by residues 89–93 (DSGGF), Asp-143, Gln-188, and Gly-215. Residues 246 to 252 (GVGKPED) form an RNA binding region. The active-site Nucleophile is the Asp-265. The tract at residues 270–274 (TRNAR) is RNA binding; important for wobble base 34 recognition. Residues Cys-303, Cys-305, Cys-308, and His-334 each contribute to the Zn(2+) site.

It belongs to the queuine tRNA-ribosyltransferase family. In terms of assembly, homodimer. Within each dimer, one monomer is responsible for RNA recognition and catalysis, while the other monomer binds to the replacement base PreQ1. Zn(2+) is required as a cofactor.

It catalyses the reaction 7-aminomethyl-7-carbaguanine + guanosine(34) in tRNA = 7-aminomethyl-7-carbaguanosine(34) in tRNA + guanine. The protein operates within tRNA modification; tRNA-queuosine biosynthesis. Catalyzes the base-exchange of a guanine (G) residue with the queuine precursor 7-aminomethyl-7-deazaguanine (PreQ1) at position 34 (anticodon wobble position) in tRNAs with GU(N) anticodons (tRNA-Asp, -Asn, -His and -Tyr). Catalysis occurs through a double-displacement mechanism. The nucleophile active site attacks the C1' of nucleotide 34 to detach the guanine base from the RNA, forming a covalent enzyme-RNA intermediate. The proton acceptor active site deprotonates the incoming PreQ1, allowing a nucleophilic attack on the C1' of the ribose to form the product. After dissociation, two additional enzymatic reactions on the tRNA convert PreQ1 to queuine (Q), resulting in the hypermodified nucleoside queuosine (7-(((4,5-cis-dihydroxy-2-cyclopenten-1-yl)amino)methyl)-7-deazaguanosine). The chain is Queuine tRNA-ribosyltransferase from Acinetobacter baumannii (strain SDF).